We begin with the raw amino-acid sequence, 67 residues long: DNA-directed RNA polymerase subunit omega (67 aa).

This sequence belongs to the RNA polymerase subunit omega family. The RNAP catalytic core consists of 2 alpha, 1 beta, 1 beta' and 1 omega subunit. When a sigma factor is associated with the core the holoenzyme is formed, which can initiate transcription.

It catalyses the reaction RNA(n) + a ribonucleoside 5'-triphosphate = RNA(n+1) + diphosphate. Its function is as follows. Promotes RNA polymerase assembly. Latches the N- and C-terminal regions of the beta' subunit thereby facilitating its interaction with the beta and alpha subunits. The protein is DNA-directed RNA polymerase subunit omega of Exiguobacterium sibiricum (strain DSM 17290 / CCUG 55495 / CIP 109462 / JCM 13490 / 255-15).